Here is a 526-residue protein sequence, read N- to C-terminus: MGVEHELVVVDEFDALSIELKRPNGSSSSSPSRAVSVEKYPAKTHARKVADKLGVDKGLIYLQGKPTTTYEDSDMEPPFRQRRYFYYMSGADFPNAHLTYDVATDQLLLWIPTRQPREELYLGRIPSREDCMSRLDVDDCRDVVQMTRFIAAHLKHHPGTTLFLLHSDQAPGLDDLPVQYAGRRLDIGRLRLAVDAARVIKTPFEIRQIRRANQVSSEAHRAVLRQIRHLRTEADVEAVFVAACRVRGARSQAYNPIAGAGANAATLHYVDNAAPLKGKQTLVLDAGCEWDCYASDITRTMPAAGRKFSPEAQTIYRIVEKMQNACIDLVRPGVSYLFIQATAQLVAIEEFLKIGLLVGDKAKIAASRVVSAFFPHGLGHHVGLETHDVRSERLLGYDKSSAALWRGKRLVMSVEQCDRVAELMVTARQQGADARDALAEGMVITIEPGIYFNRQYIEAFCSDVPERGSFINKSVLDRYYPVGGVRIEDDILVTADGYENLTTAPKGEEALRIINGDDVEADAVLV.

Mn(2+) is bound by residues Asp285, Asp296, Glu447, and Glu488.

It belongs to the peptidase M24B family. It depends on Mn(2+) as a cofactor.

The catalysed reaction is Release of any N-terminal amino acid, including proline, that is linked to proline, even from a dipeptide or tripeptide.. In terms of biological role, catalyzes the removal of a penultimate prolyl residue from the N-termini of peptides. This chain is Probable Xaa-Pro aminopeptidase MGG_05684, found in Pyricularia oryzae (strain 70-15 / ATCC MYA-4617 / FGSC 8958) (Rice blast fungus).